The chain runs to 417 residues: Signal recognition particle receptor FtsY (417 aa).

Residues 228–235, 310–314, and 368–371 contribute to the GTP site; these read GINGTGKT, DTAGR, and TKID.

This sequence belongs to the GTP-binding SRP family. FtsY subfamily. In terms of assembly, part of the signal recognition particle protein translocation system, which is composed of SRP and FtsY.

The protein resides in the cell membrane. Its subcellular location is the cytoplasm. The catalysed reaction is GTP + H2O = GDP + phosphate + H(+). In terms of biological role, involved in targeting and insertion of nascent membrane proteins into the cytoplasmic membrane. Acts as a receptor for the complex formed by the signal recognition particle (SRP) and the ribosome-nascent chain (RNC). In Methanosarcina acetivorans (strain ATCC 35395 / DSM 2834 / JCM 12185 / C2A), this protein is Signal recognition particle receptor FtsY.